A 498-amino-acid chain; its full sequence is Argininosuccinate lyase 1 (498 aa).

Belongs to the lyase 1 family. Argininosuccinate lyase subfamily.

The protein localises to the cytoplasm. It carries out the reaction 2-(N(omega)-L-arginino)succinate = fumarate + L-arginine. It functions in the pathway amino-acid biosynthesis; L-arginine biosynthesis; L-arginine from L-ornithine and carbamoyl phosphate: step 3/3. This chain is Argininosuccinate lyase 1, found in Shouchella clausii (strain KSM-K16) (Alkalihalobacillus clausii).